Consider the following 305-residue polypeptide: Glycine--tRNA ligase alpha subunit (305 aa).

Belongs to the class-II aminoacyl-tRNA synthetase family. In terms of assembly, tetramer of two alpha and two beta subunits.

It localises to the cytoplasm. It carries out the reaction tRNA(Gly) + glycine + ATP = glycyl-tRNA(Gly) + AMP + diphosphate. The protein is Glycine--tRNA ligase alpha subunit of Vibrio vulnificus (strain CMCP6).